The chain runs to 2039 residues: Methylcytosine dioxygenase TET1 (2039 aa).

The span at 1 to 19 (MSRSRPAKPSKSVKTKLQK) shows a compositional bias: basic residues. 3 disordered regions span residues 1–79 (MSRS…AGAA), 119–168 (VVTP…NGEQ), and 227–286 (DNEC…GFPD). Basic and acidic residues-rich tracts occupy residues 53 to 65 (KRRDGKKETEDKT) and 138 to 149 (IQDEPGVKHSEN). Composition is skewed to polar residues over residues 150–168 (DSVPSQHATVSPGTENGEQ) and 241–265 (QRSTSEVTSQKNTSNQLADLSSQVE). The interval 512–657 (LDLTQGSQAA…NGPKSESMDC (146 aa)) is sufficient for binding to genomic CpG islands. The CXXC-type zinc-finger motif lies at 567–608 (ERRKRKACGVCEPCQQKANCGECTYCKNRKNSHQICKKRKCE). Residues Cys-574, Cys-577, Cys-580, Cys-586, Cys-589, Cys-592, Cys-602, and Cys-607 each coordinate Zn(2+). Disordered regions lie at residues 613–670 (KPEA…QRLD), 711–735 (CDANLTGVENPQPSEDDKQQTNPSP), 820–859 (GAEPTIFNNHPNTHSAGSRPHPPEKVPNKEPKDGSPVQPS), 882–906 (QLSEAPSESSSPSKPEKDEEAHQKT), 964–993 (QGYPSSPTAEKKGAAGGRAPFDGFENSHPL), 1050–1129 (VRNA…KKQE), 1209–1240 (VEPSDSLPTCQFKTESGGQTFAEPADNSQGQP), and 1322–1341 (KREAQTSSNGPLGPTTDSAQ). Residues 653-670 (ESMDCSRRGHGEEEQRLD) show a composition bias toward basic and acidic residues. The segment covering 825–835 (IFNNHPNTHSA) has biased composition (polar residues). A compositionally biased stretch (basic and acidic residues) spans 840-852 (HPPEKVPNKEPKD). At Ser-854 the chain carries Phosphoserine. Residues 884 to 894 (SEAPSESSSPS) are compositionally biased toward low complexity. Residues 895 to 904 (KPEKDEEAHQ) are compositionally biased toward basic and acidic residues. The segment covering 1053–1064 (AESTPESLVAKN) has biased composition (polar residues). Residues 1094-1116 (KPKKAQKKARATPHANKRKKKPP) are compositionally biased toward basic residues. Polar residues-rich tracts occupy residues 1214–1227 (SLPTCQFKTESGGQ) and 1326–1341 (QTSSNGPLGPTTDSAQ). Zn(2+) contacts are provided by Cys-1371, Cys-1373, Cys-1430, His-1456, and Cys-1458. Arg-1499 contacts 2-oxoglutarate. Zn(2+) contacts are provided by Cys-1509, Cys-1511, Cys-1527, and Cys-1536. The interval 1528–1541 (SWSMYFNGCKFGRS) is interaction with DNA. Residue Lys-1537 forms a Glycyl lysine isopeptide (Lys-Gly) (interchain with G-Cter in ubiquitin) linkage. Cys-1628 contributes to the Zn(2+) binding site. Residue Cys-1644 coordinates 2-oxoglutarate. His-1650 is a binding site for Zn(2+). His-1652 and Asp-1654 together coordinate Fe cation. Asn-1657 contacts substrate. His-1685 contributes to the 2-oxoglutarate binding site. Residues 1734–1743 (GKRAKMKQNH) show a composition bias toward basic residues. Disordered stretches follow at residues 1734–1760 (GKRAKMKQNHNKSGSHNTKSFSSASST) and 1830–1901 (AAHP…LPQL). Residues 1748–1760 (SHNTKSFSSASST) are compositionally biased toward low complexity. Residues 1850–1875 (TSPSEQLTSNQSNQQLPLLSNSQKLA) are compositionally biased toward polar residues. A compositionally biased stretch (basic and acidic residues) spans 1880-1895 (EDERHPEADEPQHPED). His-1939 is a binding site for Fe cation. 1954–1956 (RVS) lines the 2-oxoglutarate pocket. 1960-1962 (YQH) contributes to the substrate binding site. Residue His-1970 participates in Zn(2+) binding.

The protein belongs to the TET family. As to quaternary structure, interacts with SIN3A; recruits the transcriptional co-repressor SIN3A to gene promoters. Interacts with HCFC1. Interacts (via C-terminus) with OGT. Found in a complex composed of at least SINHCAF, SIN3A, HDAC1, SAP30, RBBP4, OGT and TET1. Interacts with QSER1. Interacts with NONO (via DNA-binding domain); this interaction recruits TET1 to genomic loci. Interacts with FOXA2; this interaction may recruit TET1 to specific enhancers to preserve their unmethylated status and hence allowing gene expression. Interacts with RNF2. Directly interacts (via C-terminus) with the DCAF1 component of the CRL4(VprBP) E3 ubiquitin-protein ligase complex. Interacts with UHRF1; this interaction induces the recruitment of TET1 to replicating heterochromatin. Interacts with DCAF1. The cofactor is Fe(2+). It depends on Zn(2+) as a cofactor. Post-translationally, glycosylated. Interaction with OGT leads to GlcNAcylation. Monoubiquitinated by the DCX (DDB1-CUL4-X-box) E3 ubiquitin-protein ligase complex called CRL4(VprBP) or CUL4A-RBX1-DDB1-DCAF1/VPRBP complex. In terms of processing, monoubiquitinated by the DCX (DDB1-CUL4-X-box) E3 ubiquitin-protein ligase complex called CRL4(VprBP) or CUL4A-RBX1-DDB1-DCAF1/VPRBP complex; this modification promotes binding to DNA. As to expression, expressed in germinal vesicle (GV) stage and MII-stage oocytes and in early embryos. Also detected somatic tissues, including brain, liver and kidney, but at very low levels. Predominantly expressed in early embryos. Also expressed in embryonic stem cells and in primordial germ cells. Expressed in adult tissues, including brain cortex, cerebellum, heart, kidney, liver, muscle and spleen, although at much lower levels than isoform 2. In the brain, expressed at higher levels in glial cells than in neurons. Expressed in placenta. Expressed in the pituitary, most probably in thyrotropes. In terms of tissue distribution, preferentially expressed in differentiated cells, including in cerebral cortex, cerebellum and thymus. Also expressed in heart, kidney, liver, muscle and spleen at much higher levels than isoform 1. In the brain, expressed at higher levels in neurons than in glial cells. Expressed in the olfactory bulb and in the mammary gland.

The protein resides in the nucleus. The protein localises to the chromosome. The enzyme catalyses a 5-methyl-2'-deoxycytidine in DNA + 2-oxoglutarate + O2 = a 5-hydroxymethyl-2'-deoxycytidine in DNA + succinate + CO2. It catalyses the reaction a 5-hydroxymethyl-2'-deoxycytidine in DNA + 2-oxoglutarate + O2 = a 5-formyl-2'-deoxycytidine in DNA + succinate + CO2 + H2O. The catalysed reaction is a 5-formyl-2'-deoxycytidine in DNA + 2-oxoglutarate + O2 = a 5-carboxyl-2'-deoxycytidine in DNA + succinate + CO2 + H(+). Functionally, dioxygenase that plays a key role in active DNA demethylation, by catalyzing the sequential oxidation of the modified genomic base 5-methylcytosine (5mC) into 5-hydroxymethylcytosine (5hmC), 5-formylcytosine (5fC), and 5-carboxylcytosine (5caC). In addition to its role in DNA demethylation, plays a more general role in chromatin regulation by recruiting histone modifying protein complexes to alter histone marks and chromatin accessibility, leading to both activation and repression of gene expression. Plays therefore a role in many biological processes, including stem cell maintenance, T- and B-cell development, inflammation regulation, iron homeostasis, neural activity or DNA repair. Involved in the balance between pluripotency and lineage commitment of cells it plays a role in embryonic stem cells maintenance and inner cell mass cell specification. Together with QSER1, plays an essential role in the protection and maintenance of transcriptional and developmental programs to inhibit the binding of DNMT3A/3B and therefore de novo methylation. May play a role in the pancreatic beta-cell specification during development. In this context, may function as an upstream epigenetic regulator of PAX4 presumably through direct recruitment by FOXA2 to a PAX4 enhancer to preserve its unmethylated status, thereby potentiating PAX4 expression to adopt beta-cell fate during endocrine lineage commitment. Under DNA hypomethylation conditions, such as in female meiotic germ cells, may induce epigenetic reprogramming of pericentromeric heterochromatin (PCH), the constitutive heterochromatin of pericentromeric regions. PCH forms chromocenters in the interphase nucleus and chromocenters cluster at the prophase of meiosis. In this context, may also be essential for chromocenter clustering in a catalytic activity-independent manner, possibly through the recruitment polycomb repressive complex 1 (PRC1) to the chromocenters. During embryonic development, may be required for normal meiotic progression in oocytes and meiotic gene activation. Binds preferentially to DNA containing cytidine-phosphate-guanosine (CpG) dinucleotides over CpH (H=A, T, and C), hemimethylated-CpG and hemimethylated-hydroxymethyl-CpG. In terms of biological role, dioxygenase that plays a key role in active DNA demethylation. Binds to promoters, particularly to those with high CG content. In hippocampal neurons, isoform 1 regulates the expression of a unique subset of genes compared to isoform 2, although some overlap between both isoforms, hence differentially regulates excitatory synaptic transmission. In hippocampal neuron cell cultures, isoform 1 controls both miniature excitatory postsynaptic current amplitude and frequency. Isoform 1 may regulate genes involved in hippocampal-dependent memory, leading to positive regulation of memory, contrary to isoform 2 that may decrease memory. Its function is as follows. Dioxygenase that plays a key role in active DNA demethylation. As isoform 1, binds to promoters, particularly to those with high CG content, however displays reduced global chromatin affinity compared with isoform 1, leading to decreased global DNA demethylation compared with isoform 1. Contrary to isoform 1, isoform 2 localizes during S phase to sites of ongoing DNA replication in heterochromatin, causing a significant de novo 5hmC formation, globally, and more so in heterochromatin, including LINE 1 interspersed DNA repeats leading to their activation. In hippocampal neurons, isoform 2 regulates the expression of a unique subset of genes compared with isoform 1, although some overlap between both isoforms, hence differentially regulating excitatory synaptic transmission. In hippocampal neuron cell cultures, isoform 2 controls miniature excitatory postsynaptic current frequency, but not amplitude. Isoform 2 may regulate genes involved in hippocampal-dependent memory, leading to negative regulation of memory, contrary to isoform 1 that may improve memory. In immature and partially differentiated gonadotrope cells, represses luteinizing hormone gene LHB expression directly and does not catalyze 5hmC at the gene promoter. The polypeptide is Methylcytosine dioxygenase TET1 (Tet1) (Mus musculus (Mouse)).